Consider the following 200-residue polypeptide: Pyridoxine/pyridoxamine 5'-phosphate oxidase (200 aa).

FMN is bound by residues 49–54 (RMLLLK), 64–65 (YT), Arg-70, Lys-71, and Gln-93. Lys-54 is a binding site for substrate. Residues Tyr-111, Arg-115, and Ser-119 each contribute to the substrate site. Residues 128–129 (QS) and Trp-173 contribute to the FMN site. 179–181 (RLH) serves as a coordination point for substrate. Arg-183 is a binding site for FMN.

The protein belongs to the pyridoxamine 5'-phosphate oxidase family. In terms of assembly, homodimer. The cofactor is FMN.

It carries out the reaction pyridoxamine 5'-phosphate + O2 + H2O = pyridoxal 5'-phosphate + H2O2 + NH4(+). It catalyses the reaction pyridoxine 5'-phosphate + O2 = pyridoxal 5'-phosphate + H2O2. It functions in the pathway cofactor metabolism; pyridoxal 5'-phosphate salvage; pyridoxal 5'-phosphate from pyridoxamine 5'-phosphate: step 1/1. Its pathway is cofactor metabolism; pyridoxal 5'-phosphate salvage; pyridoxal 5'-phosphate from pyridoxine 5'-phosphate: step 1/1. In terms of biological role, catalyzes the oxidation of either pyridoxine 5'-phosphate (PNP) or pyridoxamine 5'-phosphate (PMP) into pyridoxal 5'-phosphate (PLP). This is Pyridoxine/pyridoxamine 5'-phosphate oxidase from Gluconobacter oxydans (strain 621H) (Gluconobacter suboxydans).